The chain runs to 465 residues: GTPase Der (465 aa).

2 EngA-type G domains span residues P27 to P190 and R202 to E375. GTP is bound by residues G33–S40, D80–W84, N142–D145, G208–S215, D255–I259, and N320–D323. The KH-like domain maps to T376–E458.

Belongs to the TRAFAC class TrmE-Era-EngA-EngB-Septin-like GTPase superfamily. EngA (Der) GTPase family. Associates with the 50S ribosomal subunit.

Functionally, GTPase that plays an essential role in the late steps of ribosome biogenesis. The chain is GTPase Der from Streptomyces coelicolor (strain ATCC BAA-471 / A3(2) / M145).